Consider the following 310-residue polypeptide: Acetyl-coenzyme A carboxylase carboxyl transferase subunit alpha (310 aa).

The 255-residue stretch at 31-285 folds into the CoA carboxyltransferase C-terminal domain; the sequence is SFERELRIIN…KQKILRRLKQ (255 aa).

The protein belongs to the AccA family. Acetyl-CoA carboxylase is a heterohexamer composed of biotin carboxyl carrier protein (accB), biotin carboxylase (accC) and two subunits each of ACCase subunit alpha (accA) and ACCase subunit beta (accD).

It is found in the plastid. It localises to the chloroplast. The enzyme catalyses N(6)-carboxybiotinyl-L-lysyl-[protein] + acetyl-CoA = N(6)-biotinyl-L-lysyl-[protein] + malonyl-CoA. It participates in lipid metabolism; malonyl-CoA biosynthesis; malonyl-CoA from acetyl-CoA: step 1/1. In terms of biological role, component of the acetyl coenzyme A carboxylase (ACC) complex. First, biotin carboxylase catalyzes the carboxylation of biotin on its carrier protein (BCCP) and then the CO(2) group is transferred by the carboxyltransferase to acetyl-CoA to form malonyl-CoA. This Cyanidioschyzon merolae (strain NIES-3377 / 10D) (Unicellular red alga) protein is Acetyl-coenzyme A carboxylase carboxyl transferase subunit alpha.